We begin with the raw amino-acid sequence, 580 residues long: Arginine--tRNA ligase (580 aa).

A 'HIGH' region motif is present at residues 131-141 (ANPTGPLHVGH).

It belongs to the class-I aminoacyl-tRNA synthetase family. As to quaternary structure, monomer.

The protein resides in the cytoplasm. It catalyses the reaction tRNA(Arg) + L-arginine + ATP = L-arginyl-tRNA(Arg) + AMP + diphosphate. The protein is Arginine--tRNA ligase of Roseobacter denitrificans (strain ATCC 33942 / OCh 114) (Erythrobacter sp. (strain OCh 114)).